The chain runs to 169 residues: Cytochrome c oxidase subunit 4 isoform 1, mitochondrial (169 aa).

The N-terminal 22 residues, 1–22 (MLASRALSLIGKRAISTSVCLR), are a transit peptide targeting the mitochondrion. The Mitochondrial matrix portion of the chain corresponds to 23-99 (AHGSVVKSED…FAEMNRGTNE (77 aa)). Residue Lys-29 is modified to N6-acetyllysine; alternate. Lys-29 is modified (N6-succinyllysine; alternate). Phosphoserine occurs at positions 56 and 58. Lys-60 bears the N6-acetyllysine; alternate mark. N6-succinyllysine; alternate is present on Lys-60. At Lys-67 the chain carries N6-acetyllysine. A helical membrane pass occupies residues 100–125 (WKTVVGMAMFFIGFTALVLIWEKSYV). Over 126 to 169 (YGPIPHTFDRDWVAMQTKRMLDMKANPIQGFSAKWDYDKNEWKK) the chain is Mitochondrial intermembrane.

This sequence belongs to the cytochrome c oxidase IV family. Component of the cytochrome c oxidase (complex IV, CIV), a multisubunit enzyme composed of 14 subunits. The complex is composed of a catalytic core of 3 subunits MT-CO1, MT-CO2 and MT-CO3, encoded in the mitochondrial DNA, and 11 supernumerary subunits COX4I, COX5A, COX5B, COX6A, COX6B, COX6C, COX7A, COX7B, COX7C, COX8 and NDUFA4, which are encoded in the nuclear genome. The complex exists as a monomer or a dimer and forms supercomplexes (SCs) in the inner mitochondrial membrane with NADH-ubiquinone oxidoreductase (complex I, CI) and ubiquinol-cytochrome c oxidoreductase (cytochrome b-c1 complex, complex III, CIII), resulting in different assemblies (supercomplex SCI(1)III(2)IV(1) and megacomplex MCI(2)III(2)IV(2)). Interacts with PHB2; the interaction decreases in absence of SPHK2. Interacts with AFG1L. Interacts with ABCB7; this interaction allows the regulation of cellular iron homeostasis and cellular reactive oxygen species (ROS) levels in cardiomyocytes. Interacts with FLVCR2; this interaction occurs in the absence of heme and is disrupted upon heme binding. Interacts with IRGC.

The protein resides in the mitochondrion inner membrane. It functions in the pathway energy metabolism; oxidative phosphorylation. In terms of biological role, component of the cytochrome c oxidase, the last enzyme in the mitochondrial electron transport chain which drives oxidative phosphorylation. The respiratory chain contains 3 multisubunit complexes succinate dehydrogenase (complex II, CII), ubiquinol-cytochrome c oxidoreductase (cytochrome b-c1 complex, complex III, CIII) and cytochrome c oxidase (complex IV, CIV), that cooperate to transfer electrons derived from NADH and succinate to molecular oxygen, creating an electrochemical gradient over the inner membrane that drives transmembrane transport and the ATP synthase. Cytochrome c oxidase is the component of the respiratory chain that catalyzes the reduction of oxygen to water. Electrons originating from reduced cytochrome c in the intermembrane space (IMS) are transferred via the dinuclear copper A center (CU(A)) of subunit 2 and heme A of subunit 1 to the active site in subunit 1, a binuclear center (BNC) formed by heme A3 and copper B (CU(B)). The BNC reduces molecular oxygen to 2 water molecules using 4 electrons from cytochrome c in the IMS and 4 protons from the mitochondrial matrix. The sequence is that of Cytochrome c oxidase subunit 4 isoform 1, mitochondrial (Cox4i1) from Mus musculus (Mouse).